A 265-amino-acid polypeptide reads, in one-letter code: 4-diphosphocytidyl-2-C-methyl-D-erythritol kinase (265 aa).

Residue lysine 8 is part of the active site. 95-105 lines the ATP pocket; the sequence is PIGAGLGGGSS. The active site involves aspartate 135.

Belongs to the GHMP kinase family. IspE subfamily.

The enzyme catalyses 4-CDP-2-C-methyl-D-erythritol + ATP = 4-CDP-2-C-methyl-D-erythritol 2-phosphate + ADP + H(+). It functions in the pathway isoprenoid biosynthesis; isopentenyl diphosphate biosynthesis via DXP pathway; isopentenyl diphosphate from 1-deoxy-D-xylulose 5-phosphate: step 3/6. Its function is as follows. Catalyzes the phosphorylation of the position 2 hydroxy group of 4-diphosphocytidyl-2C-methyl-D-erythritol. In Ureaplasma parvum serovar 3 (strain ATCC 27815 / 27 / NCTC 11736), this protein is 4-diphosphocytidyl-2-C-methyl-D-erythritol kinase.